A 288-amino-acid polypeptide reads, in one-letter code: Protoheme IX farnesyltransferase (288 aa).

Transmembrane regions (helical) follow at residues valine 6 to leucine 26, phenylalanine 44 to isoleucine 64, leucine 89 to isoleucine 109, valine 111 to phenylalanine 131, isoleucine 138 to valine 158, leucine 169 to phenylalanine 189, isoleucine 213 to isoleucine 233, leucine 238 to isoleucine 258, and isoleucine 268 to valine 288.

The protein belongs to the UbiA prenyltransferase family. Protoheme IX farnesyltransferase subfamily.

The protein localises to the cell membrane. It carries out the reaction heme b + (2E,6E)-farnesyl diphosphate + H2O = Fe(II)-heme o + diphosphate. Its pathway is porphyrin-containing compound metabolism; heme O biosynthesis; heme O from protoheme: step 1/1. Converts heme B (protoheme IX) to heme O by substitution of the vinyl group on carbon 2 of heme B porphyrin ring with a hydroxyethyl farnesyl side group. In Buchnera aphidicola subsp. Baizongia pistaciae (strain Bp), this protein is Protoheme IX farnesyltransferase.